The primary structure comprises 256 residues: Omega-amidase YafV (256 aa).

Residues 4–234 enclose the CN hydrolase domain; it reads LKLTLLQQPL…AAQLDAELSL (231 aa). The active-site Proton acceptor is Glu-42. Lys-107 is an active-site residue. Catalysis depends on Cys-141, which acts as the Nucleophile.

It belongs to the carbon-nitrogen hydrolase superfamily. NIT1/NIT2 family.

The catalysed reaction is a monoamide of a dicarboxylate + H2O = a dicarboxylate + NH4(+). Its function is as follows. Hydrolyzes alpha-ketoglutaramate (a-KGM) to alpha-ketoglutarate (alpha-KG) and ammonia (specific activity 21 umol/min/mg), has very weak activity on L-glutamine, and no activity on deaminated glutathione (dGSH) or glutathione. May function as a metabolite repair enzyme. The sequence is that of Omega-amidase YafV from Yersinia enterocolitica.